The primary structure comprises 730 residues: Aspyridones cluster regulator apdR (730 aa).

Residues 20 to 46 (CTECRRRKIRCDQATPCRHCEKAALRC) constitute a DNA-binding region (zn(2)-C6 fungal-type).

It is found in the nucleus. Transcription factor involved in regulation of gene cluster that mediates the biosynthesis of aspyridones. This Emericella nidulans (strain FGSC A4 / ATCC 38163 / CBS 112.46 / NRRL 194 / M139) (Aspergillus nidulans) protein is Aspyridones cluster regulator apdR.